Here is a 362-residue protein sequence, read N- to C-terminus: N-alpha-acetyltransferase 30 (362 aa).

The segment covering 1–20 has biased composition (pro residues); the sequence is MAEVPPGPSSLLPPPAPPAP. Disordered regions lie at residues 1–26, 38–88, and 113–182; these read MAEV…VEPR, CSED…NGLI, and ATTA…EEDE. Residues Ser39 and Ser55 each carry the phosphoserine modification. Positions 39-48 are enriched in acidic residues; it reads SEDEEDDEEH. Thr117 bears the Phosphothreonine mark. The span at 149-165 shows a compositional bias: low complexity; sequence AVPSPVEAAAASDPAAA. Phosphoserine is present on Ser152. Residues 173-182 show a composition bias toward acidic residues; it reads TEQEEEEEDE. Phosphoserine occurs at positions 190, 196, and 199. Residues 214 to 362 enclose the N-acetyltransferase domain; the sequence is RYVRYESELQ…DALRLKLWLR (149 aa). At Lys233 the chain carries N6-acetyllysine.

Belongs to the acetyltransferase family. MAK3 subfamily. As to quaternary structure, component of the N-terminal acetyltransferase C (NatC) complex, which is composed of NAA35, NAA38 and NAA30.

It localises to the cytoplasm. It is found in the nucleus. The enzyme catalyses N-terminal L-methionyl-L-leucyl-[protein] + acetyl-CoA = N-terminal N(alpha)-acetyl-L-methionyl-L-leucyl-[protein] + CoA + H(+). The catalysed reaction is N-terminal L-methionyl-L-isoleucyl-[protein] + acetyl-CoA = N-terminal N(alpha)-acetyl-L-methionyl-L-isoleucyl-[protein] + CoA + H(+). It carries out the reaction N-terminal L-methionyl-L-phenylalanyl-[protein] + acetyl-CoA = N-terminal N(alpha)-acetyl-L-methionyl-L-phenylalanyl-[protein] + CoA + H(+). It catalyses the reaction N-terminal L-methionyl-L-tryptophyl-[protein] + acetyl-CoA = N-terminal N(alpha)-acetyl-L-methionyl-L-tryptophyl-[protein] + CoA + H(+). The enzyme catalyses N-terminal L-methionyl-L-tyrosyl-[protein] + acetyl-CoA = N-terminal N(alpha)-acetyl-L-methionyl-L-tyrosyl-[protein] + CoA + H(+). In terms of biological role, catalytic subunit of the N-terminal acetyltransferase C (NatC) complex. Catalyzes acetylation of the N-terminal methionine residues of peptides beginning with Met-Leu-Ala and Met-Leu-Gly. N-terminal acetylation protects proteins from ubiquitination and degradation by the N-end rule pathway. Necessary for the lysosomal localization and function of ARL8B sugeesting that ARL8B is a NatC substrate. In Homo sapiens (Human), this protein is N-alpha-acetyltransferase 30 (NAA30).